Here is a 122-residue protein sequence, read N- to C-terminus: Large ribosomal subunit protein uL14c (122 aa).

This sequence belongs to the universal ribosomal protein uL14 family. Part of the 50S ribosomal subunit.

Its subcellular location is the plastid. The protein localises to the chloroplast. Its function is as follows. Binds to 23S rRNA. This Amborella trichopoda protein is Large ribosomal subunit protein uL14c.